The chain runs to 548 residues: CTP synthase (548 aa).

The tract at residues 1–267 (MKTKFIFITG…DQKIAIMLQL (267 aa)) is amidoligase domain. S14 lines the CTP pocket. Position 14 (S14) interacts with UTP. ATP contacts are provided by residues 15–20 (SLGKGL) and D72. Residues D72 and E141 each coordinate Mg(2+). CTP is bound by residues 148-150 (DIE), 188-193 (KTKPTQ), and K224. UTP contacts are provided by residues 188–193 (KTKPTQ) and K224. The region spanning 292–545 (TIGIVGKYVD…IKAAGKQAVK (254 aa)) is the Glutamine amidotransferase type-1 domain. G354 contacts L-glutamine. Catalysis depends on C381, which acts as the Nucleophile; for glutamine hydrolysis. Residues 382–385 (LGMQ), E405, and R473 each bind L-glutamine. Catalysis depends on residues H518 and E520.

It belongs to the CTP synthase family. As to quaternary structure, homotetramer.

The enzyme catalyses UTP + L-glutamine + ATP + H2O = CTP + L-glutamate + ADP + phosphate + 2 H(+). It catalyses the reaction L-glutamine + H2O = L-glutamate + NH4(+). The catalysed reaction is UTP + NH4(+) + ATP = CTP + ADP + phosphate + 2 H(+). The protein operates within pyrimidine metabolism; CTP biosynthesis via de novo pathway; CTP from UDP: step 2/2. Its activity is regulated as follows. Allosterically activated by GTP, when glutamine is the substrate; GTP has no effect on the reaction when ammonia is the substrate. The allosteric effector GTP functions by stabilizing the protein conformation that binds the tetrahedral intermediate(s) formed during glutamine hydrolysis. Inhibited by the product CTP, via allosteric rather than competitive inhibition. In terms of biological role, catalyzes the ATP-dependent amination of UTP to CTP with either L-glutamine or ammonia as the source of nitrogen. Regulates intracellular CTP levels through interactions with the four ribonucleotide triphosphates. The protein is CTP synthase of Oleidesulfovibrio alaskensis (strain ATCC BAA-1058 / DSM 17464 / G20) (Desulfovibrio alaskensis).